The primary structure comprises 96 residues: Co-chaperonin GroES (96 aa).

Belongs to the GroES chaperonin family. Heptamer of 7 subunits arranged in a ring. Interacts with the chaperonin GroEL.

It is found in the cytoplasm. Together with the chaperonin GroEL, plays an essential role in assisting protein folding. The GroEL-GroES system forms a nano-cage that allows encapsulation of the non-native substrate proteins and provides a physical environment optimized to promote and accelerate protein folding. GroES binds to the apical surface of the GroEL ring, thereby capping the opening of the GroEL channel. In Coxiella burnetii (strain Dugway 5J108-111), this protein is Co-chaperonin GroES.